A 204-amino-acid chain; its full sequence is Tat proofreading chaperone DmsD (204 aa).

Belongs to the TorD/DmsD family. DmsD subfamily.

Its function is as follows. Required for biogenesis/assembly of DMSO reductase, but not for the interaction of the DmsA signal peptide with the Tat system. May be part of a chaperone cascade complex that facilitates a folding-maturation pathway for the substrate protein. The sequence is that of Tat proofreading chaperone DmsD from Salmonella paratyphi A (strain ATCC 9150 / SARB42).